The following is a 570-amino-acid chain: Fibropellin-3 (570 aa).

An N-terminal signal peptide occupies residues 1–17 (MKVSLLAVLLLSIVAAT). The EGF-like 1 domain occupies 18-55 (YGQGECGSNPCENGSVCRDGEGTYICECQMGYDGQNCD). 4 disulfide bridges follow: cysteine 23–cysteine 34, cysteine 28–cysteine 43, cysteine 45–cysteine 54, and cysteine 62–cysteine 88. N-linked (GlcNAc...) asparagine glycosylation is present at asparagine 30. The CUB domain occupies 62–175 (CGYNIFESTG…RKGFRITFSS (114 aa)). The N-linked (GlcNAc...) asparagine glycan is linked to asparagine 136. One can recognise an EGF-like 2; calcium-binding domain in the interval 176–212 (DGDDCTPNPCLNGATCVDQVNDYQCICAPGFTGDNCE). 22 disulfide bridges follow: cysteine 180–cysteine 191, cysteine 185–cysteine 200, cysteine 202–cysteine 211, cysteine 218–cysteine 229, cysteine 223–cysteine 238, cysteine 240–cysteine 249, cysteine 256–cysteine 267, cysteine 261–cysteine 276, cysteine 278–cysteine 287, cysteine 294–cysteine 305, cysteine 299–cysteine 314, cysteine 316–cysteine 325, cysteine 332–cysteine 343, cysteine 337–cysteine 352, cysteine 354–cysteine 363, cysteine 370–cysteine 381, cysteine 375–cysteine 390, cysteine 392–cysteine 401, cysteine 408–cysteine 419, cysteine 413–cysteine 428, cysteine 430–cysteine 439, and cysteine 445–cysteine 521. The EGF-like 3; calcium-binding domain occupies 214-250 (DIDECASAPCRNGGACVDQVNGYTCNCIPGFNGVNCE). Residues 252–288 (NINECASIPCLNGGICVDGINQFACTCLPGYTGILCE) enclose the EGF-like 4; calcium-binding domain. The EGF-like 5; calcium-binding domain maps to 290–326 (DINECASSPCQNGGSCTDAVNRYTCDCRAGFTGSNCE). The 37-residue stretch at 328–364 (NINECASSPCLNGGSCLDGVDGYVCQCLPNYTGTHCE) folds into the EGF-like 6; calcium-binding domain. N-linked (GlcNAc...) asparagine glycosylation is present at asparagine 357. One can recognise an EGF-like 7 domain in the interval 366–402 (SLDACASLPCQNGGVCTNVGGDYVCECLPGYTGINCE). An EGF-like 8; calcium-binding domain is found at 404–440 (DINECASLPCQNGGECINGIAMYICQCRQGYAGVNCE). The Avidin-like domain maps to 443–562 (GFCDLEGVWF…GQDKWTRYEQ (120 aa)).

Homotetramer.

It is found in the secreted. The protein resides in the extracellular space. Its function is as follows. Forms the apical lamina, a component of the extracellular matrix. The protein is Fibropellin-3 (EGF3) of Strongylocentrotus purpuratus (Purple sea urchin).